The chain runs to 147 residues: Large ribosomal subunit protein uL15 (147 aa).

The segment at 1–62 (MKLHELKPAQ…GQQPLSRRMP (62 aa)) is disordered. Composition is skewed to gly residues over residues 21 to 31 (RGIGSGTGKTS) and 42 to 52 (AGGGVRPGFEG).

It belongs to the universal ribosomal protein uL15 family. As to quaternary structure, part of the 50S ribosomal subunit.

In terms of biological role, binds to the 23S rRNA. The chain is Large ribosomal subunit protein uL15 from Desulfitobacterium hafniense (strain DSM 10664 / DCB-2).